The chain runs to 722 residues: Threonine--tRNA ligase 1, cytoplasmic (722 aa).

The span at 1 to 10 shows a compositional bias: polar residues; the sequence is MSQEKASSPS. Residues 1–48 form a disordered region; that stretch reads MSQEKASSPSGKMDGEKPVDASEEKRKEGGKKKSKDGGGDGGRAELNP. The segment covering 13-27 has biased composition (basic and acidic residues); that stretch reads MDGEKPVDASEEKRK. Residues 78–142 form the TGS domain; sequence DSKPIKVTLP…ETDCTLELLK (65 aa). K242 carries the N6-acetyllysine modification. A Phosphothreonine modification is found at T245. Residue Y297 is modified to Phosphotyrosine. Residue T452 is modified to Phosphothreonine.

This sequence belongs to the class-II aminoacyl-tRNA synthetase family. In terms of assembly, homodimer. Post-translationally, ISGylated.

It localises to the cytoplasm. It carries out the reaction tRNA(Thr) + L-threonine + ATP = L-threonyl-tRNA(Thr) + AMP + diphosphate + H(+). Catalyzes the attachment of threonine to tRNA(Thr) in a two-step reaction: threonine is first activated by ATP to form Thr-AMP and then transferred to the acceptor end of tRNA(Thr). Also edits incorrectly charged tRNA(Thr) via its editing domain, at the post-transfer stage. The polypeptide is Threonine--tRNA ligase 1, cytoplasmic (Tars1) (Mus musculus (Mouse)).